A 228-amino-acid polypeptide reads, in one-letter code: NAD(P)H-quinone oxidoreductase subunit K, chloroplastic (228 aa).

[4Fe-4S] cluster is bound by residues Cys43, Cys44, Cys108, and Cys139.

It belongs to the complex I 20 kDa subunit family. In terms of assembly, NDH is composed of at least 16 different subunits, 5 of which are encoded in the nucleus. The cofactor is [4Fe-4S] cluster.

The protein resides in the plastid. It localises to the chloroplast thylakoid membrane. It catalyses the reaction a plastoquinone + NADH + (n+1) H(+)(in) = a plastoquinol + NAD(+) + n H(+)(out). The enzyme catalyses a plastoquinone + NADPH + (n+1) H(+)(in) = a plastoquinol + NADP(+) + n H(+)(out). Functionally, NDH shuttles electrons from NAD(P)H:plastoquinone, via FMN and iron-sulfur (Fe-S) centers, to quinones in the photosynthetic chain and possibly in a chloroplast respiratory chain. The immediate electron acceptor for the enzyme in this species is believed to be plastoquinone. Couples the redox reaction to proton translocation, and thus conserves the redox energy in a proton gradient. This is NAD(P)H-quinone oxidoreductase subunit K, chloroplastic from Ceratophyllum demersum (Rigid hornwort).